The sequence spans 192 residues: NADH dehydrogenase [ubiquinone] iron-sulfur protein 3 (192 aa).

Belongs to the complex I 30 kDa subunit family. As to quaternary structure, complex I is composed of about 45 different subunits. This is a component of the iron-sulfur (IP) fragment of the enzyme.

It localises to the mitochondrion inner membrane. The catalysed reaction is a ubiquinone + NADH + 5 H(+)(in) = a ubiquinol + NAD(+) + 4 H(+)(out). Functionally, core subunit of the mitochondrial membrane respiratory chain NADH dehydrogenase (Complex I) that is believed to belong to the minimal assembly required for catalysis. Complex I functions in the transfer of electrons from NADH to the respiratory chain. The immediate electron acceptor for the enzyme is believed to be ubiquinone. The sequence is that of NADH dehydrogenase [ubiquinone] iron-sulfur protein 3 (NAD9) from Patellifolia webbiana (Patellaria webbiana).